The chain runs to 247 residues: Synaptonemal complex central element protein 1-like (247 aa).

A coiled-coil region spans residues 71–196 (SEELGEAQAL…LQEARETWDS (126 aa)). The interval 189 to 247 (EARETWDSPGNCGLKTELEELEGQSQRSPEAQNDKGEASQEEQHHLETSEELPRTGTLC) is disordered. The span at 220 to 241 (QNDKGEASQEEQHHLETSEELP) shows a compositional bias: basic and acidic residues.

This sequence belongs to the SYCE family. As to expression, isoform 1 is abundantly expressed in testis and weakly in ovary, it is not found in other tissues. Isoform 2 is expressed in testis and poorly in brain, heart, lung and other examined tissues.

May be involved in meiosis. Isoform 1 may be involved in meiosis during spermatogenesis while isoform 2 is probably related to a later stage of meiosis, in the development stage of secondary spermatocytes and spermatids. The sequence is that of Synaptonemal complex central element protein 1-like (Syce1l) from Mus musculus (Mouse).